Reading from the N-terminus, the 248-residue chain is MADWVTGKVTKVQNWTDALFSLTVHAPVLPFTAGQFTKLGLEIDGERVQRAYSYVNSPDNPDLEFYLVTVPDGKLSPRLAALKPGDEVQVVSEAAGFFVLDEVPDCETLWMLATGTAIGPYLSILQLGKDLDRFKNLVLVHAARYAADLSYLPLMQELEKRYEGKLRIQTVVSRETAAGSLTGRIPALIESGELESAIGLPMNKETSHVMLCGNPQMVRDTQQLLKETRQMTKHLRRRPGHMTAEHYW.

Residues 2 to 101 (ADWVTGKVTK…SEAAGFFVLD (100 aa)) enclose the FAD-binding FR-type domain. FAD is bound by residues 50–53 (RAYS), Y66, 74–76 (KLS), and T116. NADP(+)-binding positions include 143–144 (AR), 173–174 (SR), R184, 214–216 (NPQ), and D220. An FAD-binding site is contributed by 247 to 248 (YW).

This sequence belongs to the ferredoxin--NADP reductase type 1 family. The cofactor is FAD.

It localises to the cytoplasm. The catalysed reaction is 2 reduced [2Fe-2S]-[ferredoxin] + NADP(+) + H(+) = 2 oxidized [2Fe-2S]-[ferredoxin] + NADPH. It carries out the reaction reduced [flavodoxin] + NADP(+) = oxidized [flavodoxin] + NADPH + 2 H(+). In terms of biological role, transports electrons between flavodoxin or ferredoxin and NADPH. The chain is Flavodoxin/ferredoxin--NADP reductase (fpr) from Shigella flexneri.